We begin with the raw amino-acid sequence, 500 residues long: Probable malate:quinone oxidoreductase (500 aa).

It belongs to the MQO family. The cofactor is FAD.

It catalyses the reaction (S)-malate + a quinone = a quinol + oxaloacetate. Its pathway is carbohydrate metabolism; tricarboxylic acid cycle; oxaloacetate from (S)-malate (quinone route): step 1/1. The sequence is that of Probable malate:quinone oxidoreductase from Bordetella avium (strain 197N).